We begin with the raw amino-acid sequence, 518 residues long: Probable G-protein coupled receptor Mth-like 2 (518 aa).

A signal peptide spans 1–26 (MIASSKMLLSASILIYFLLNLQSSSA). Over 27-220 (EIADCSFYDT…CLILPSRTGQ (194 aa)) the chain is Extracellular. Cystine bridges form between C31-C85, C87-C92, C96-C190, C97-C108, and C152-C211. N-linked (GlcNAc...) asparagine glycosylation occurs at N47. Residues N111, N125, and N201 are each glycosylated (N-linked (GlcNAc...) asparagine). Residues 221–241 (TVVMITSLICLVLTIAVYLCV) traverse the membrane as a helical segment. The Cytoplasmic portion of the chain corresponds to 242–250 (KKLMNLEGK). Residues 251-271 (CFICYMMCLFFGYLFLLLDLW) traverse the membrane as a helical segment. Residues 272 to 279 (ELSLDFCK) are Extracellular-facing. A helical membrane pass occupies residues 280–300 (AAGFLGYFFVMAAFFWLSIIS). Topologically, residues 301–321 (RHYWKCLTNPCASMNIRSERA) are cytoplasmic. Residues 322–342 (FLLYSCFAWAMPLALTGVTYL) traverse the membrane as a helical segment. Over 343-371 (ADNVVNNEEWQPRVGDEGHCWIYTKSWSA) the chain is Extracellular. The helical transmembrane segment at 372–392 (MVYFYGPMVLLILFNITMFVL) threads the bilayer. Over 393 to 426 (TAKHIIDSKRTLRKIARNEGRIQKLNSDKQNYTQ) the chain is Cytoplasmic. Residues 427 to 447 (FLLLFTVMGMSWSFEIFSYLV) form a helical membrane-spanning segment. Residues 448–455 (QREKLWVN) lie on the Extracellular side of the membrane. A helical membrane pass occupies residues 456 to 476 (IFLVADYFNWSQGVIIFVLFI). At 477–518 (LRRKTLVLFKKQIFPKQRAFSRSATQSTIESISQTKRHFNMT) the chain is on the cytoplasmic side.

The protein belongs to the G-protein coupled receptor 2 family. Mth subfamily.

It localises to the cell membrane. The polypeptide is Probable G-protein coupled receptor Mth-like 2 (mthl2) (Drosophila melanogaster (Fruit fly)).